We begin with the raw amino-acid sequence, 638 residues long: Outer dense fiber protein 2 (638 aa).

A Phosphothreonine modification is found at threonine 73. At serine 76 the chain carries Phosphoserine; by TSSK4. A phosphoserine mark is found at serine 87 and serine 90. Threonine 91 bears the Phosphothreonine mark. A phosphoserine mark is found at serine 96 and serine 110. A Glycyl lysine isopeptide (Lys-Gly) (interchain with G-Cter in SUMO2) cross-link involves residue lysine 119. At serine 120 the chain carries Phosphoserine. Positions 125–198 (QKGERQMAKR…MSKLVEAEMD (74 aa)) form a coiled coil. Threonine 212 is modified (phosphothreonine). Coiled coils occupy residues 226-404 (DINT…AEQL) and 442-616 (EIIV…SDLR). The residue at position 242 (serine 242) is a Phosphoserine. Residues 373–396 (KQKGDRDKESLKKAIRAQKERAEK) are disordered. At serine 613 the chain carries Phosphoserine.

This sequence belongs to the ODF2 family. In terms of assembly, self-associates. Associates with microtubules and forms a fibrillar structure partially linked to the microtubule network. Interacts via its C-terminus with PLK1. Interacts with ODF1. Localized at the distal/subdistal appendages of mother centrioles. Interacts with MARK4; the interaction is required for localization of ODF2 to centrioles. Interacts with TSSK4. Interacts with AKNA. Interacts with QRICH2. Interacts with CFAP58. Interacts with BBOF1. Interacts with CCDC38. Interacts with CCDC42. Post-translationally, tyrosine phosphorylated. Phosphorylated on Ser-76 by TSSK4.

The protein resides in the cytoplasm. It localises to the cytoskeleton. Its subcellular location is the microtubule organizing center. The protein localises to the centrosome. It is found in the cell projection. The protein resides in the cilium. It localises to the centriole. Its subcellular location is the spindle pole. The protein localises to the flagellum. Seems to be a major component of sperm tail outer dense fibers (ODF). ODFs are filamentous structures located on the outside of the axoneme in the midpiece and principal piece of the mammalian sperm tail and may help to maintain the passive elastic structures and elastic recoil of the sperm tail. May have a modulating influence on sperm motility. Functions as a general scaffold protein that is specifically localized at the distal/subdistal appendages of mother centrioles. Component of the centrosome matrix required for the localization of PLK1 and NIN to the centrosomes. Required for the formation and/or maintenance of normal CETN1 assembly. In Macaca fascicularis (Crab-eating macaque), this protein is Outer dense fiber protein 2 (ODF2).